Consider the following 161-residue polypeptide: Phosphopantetheine adenylyltransferase (161 aa).

Thr10 lines the substrate pocket. Residues 10 to 11 and His18 contribute to the ATP site; that span reads TF. 3 residues coordinate substrate: Lys42, Met74, and Arg88. Residues 89–91, Glu99, and 124–130 each bind ATP; these read GLR and WSFISSS.

Belongs to the bacterial CoaD family. As to quaternary structure, homohexamer. Requires Mg(2+) as cofactor.

It localises to the cytoplasm. The catalysed reaction is (R)-4'-phosphopantetheine + ATP + H(+) = 3'-dephospho-CoA + diphosphate. It functions in the pathway cofactor biosynthesis; coenzyme A biosynthesis; CoA from (R)-pantothenate: step 4/5. Reversibly transfers an adenylyl group from ATP to 4'-phosphopantetheine, yielding dephospho-CoA (dPCoA) and pyrophosphate. The chain is Phosphopantetheine adenylyltransferase from Edwardsiella ictaluri (strain 93-146).